We begin with the raw amino-acid sequence, 683 residues long: DNA ligase (683 aa).

NAD(+) contacts are provided by residues 36-40 (DAEYD), 85-86 (SL), and E119. K121 (N6-AMP-lysine intermediate) is an active-site residue. R142, E179, K295, and K319 together coordinate NAD(+). Zn(2+)-binding residues include C413, C416, C431, and C437. The BRCT domain occupies 596–683 (TETLPLSGQT…EHQAHLGGEA (88 aa)).

The protein belongs to the NAD-dependent DNA ligase family. LigA subfamily. Mg(2+) is required as a cofactor. The cofactor is Mn(2+).

It carries out the reaction NAD(+) + (deoxyribonucleotide)n-3'-hydroxyl + 5'-phospho-(deoxyribonucleotide)m = (deoxyribonucleotide)n+m + AMP + beta-nicotinamide D-nucleotide.. Its function is as follows. DNA ligase that catalyzes the formation of phosphodiester linkages between 5'-phosphoryl and 3'-hydroxyl groups in double-stranded DNA using NAD as a coenzyme and as the energy source for the reaction. It is essential for DNA replication and repair of damaged DNA. The protein is DNA ligase of Hahella chejuensis (strain KCTC 2396).